We begin with the raw amino-acid sequence, 209 residues long: Endonuclease III (209 aa).

Residues 108 to 127 (RTELESLPGVGRKTANIILN) enclose the HhH domain. Residues C187, C194, C197, and C203 each contribute to the [4Fe-4S] cluster site.

It belongs to the Nth/MutY family. The cofactor is [4Fe-4S] cluster.

It catalyses the reaction 2'-deoxyribonucleotide-(2'-deoxyribose 5'-phosphate)-2'-deoxyribonucleotide-DNA = a 3'-end 2'-deoxyribonucleotide-(2,3-dehydro-2,3-deoxyribose 5'-phosphate)-DNA + a 5'-end 5'-phospho-2'-deoxyribonucleoside-DNA + H(+). Functionally, DNA repair enzyme that has both DNA N-glycosylase activity and AP-lyase activity. The DNA N-glycosylase activity releases various damaged pyrimidines from DNA by cleaving the N-glycosidic bond, leaving an AP (apurinic/apyrimidinic) site. The AP-lyase activity cleaves the phosphodiester bond 3' to the AP site by a beta-elimination, leaving a 3'-terminal unsaturated sugar and a product with a terminal 5'-phosphate. The protein is Endonuclease III of Buchnera aphidicola subsp. Schizaphis graminum (strain Sg).